The primary structure comprises 123 residues: Large ribosomal subunit protein uL29x (123 aa).

The protein belongs to the universal ribosomal protein uL29 family.

In Arabidopsis thaliana (Mouse-ear cress), this protein is Large ribosomal subunit protein uL29x (RPL35C).